A 710-amino-acid chain; its full sequence is Dendrin (710 aa).

Disordered stretches follow at residues 1–22, 62–195, 213–274, and 324–375; these read MLDG…DEES, WARG…PWGG, AGTA…KRLD, and GLNS…GKEG. Positions 103 to 134 form a coiled coil; the sequence is AEVRAREQEKRKAASQEREAKETERKRRKAGG. Basic and acidic residues predominate over residues 105–127; it reads VRAREQEKRKAASQEREAKETER. The interval 113-131 is nuclear localization; the sequence is RKAASQEREAKETERKRRK. The segment at 186-236 is interaction with MAGI2; the sequence is GVAWAGPWGGRRPGPPSYEAHLLLRGSAGTAPRRRWDRPPPYVAPPSYEGP. Residues 265 to 274 show a composition bias toward basic and acidic residues; the sequence is EGGRTKKRLD. Residues 341–435 are interaction with ACTN1; sequence PGTDAALSRS…LEVWKVTRRA (95 aa). The span at 360–370 shows a compositional bias: basic residues; sequence PRSRQHLRGSR. S388 is modified (phosphoserine). Disordered stretches follow at residues 390 to 422, 469 to 508, and 521 to 710; these read KKPP…EGAE, PRTQ…ANPS, and NQPS…RERE. The interval 407 to 708 is interaction with CD2AP and NPHS1; that stretch reads GGTGWKESLG…TRKTPQGNRE (302 aa). Over residues 469 to 491 the composition is skewed to polar residues; that stretch reads PRTQQGQLVPSGESCSVSDSLSQ. Residues 693–710 are compositionally biased toward basic and acidic residues; sequence GFIREDTRKTPQGNRERE.

Forms a ternary complex with MAGI2 and SH3KBP1; recruits DDN to the cytoplasm. Interacts with MAGI1. Interacts with ACTN1 and may interact with WWC1. Interacts with the podocyte slit diaphragm proteins CD2AP, NPHS1 and NPHS2; the interaction with CD2AP and NPHS1 is direct. As to expression, two forms of 81 kDa and 89 kDa are expressed in brain. The 81 kDa form is the only one found in kidney podocytes.

It localises to the cell projection. Its subcellular location is the dendritic spine membrane. The protein localises to the cytoplasm. It is found in the endoplasmic reticulum membrane. The protein resides in the perikaryon. It localises to the nucleus. In terms of biological role, promotes apoptosis of kidney glomerular podocytes. Podocytes are highly specialized cells essential to the ultrafiltration of blood, resulting in the extraction of urine and the retention of protein. This chain is Dendrin (Ddn), found in Mus musculus (Mouse).